The following is a 247-amino-acid chain: Cell division protein ZapD (247 aa).

Belongs to the ZapD family. Interacts with FtsZ.

Its subcellular location is the cytoplasm. Cell division factor that enhances FtsZ-ring assembly. Directly interacts with FtsZ and promotes bundling of FtsZ protofilaments, with a reduction in FtsZ GTPase activity. The protein is Cell division protein ZapD of Escherichia coli O7:K1 (strain IAI39 / ExPEC).